The chain runs to 118 residues: Small ribosomal subunit protein uS13 (118 aa).

The disordered stretch occupies residues 94 to 118 (SLPLRGQRTKTNARTRKGPRKPIKK).

This sequence belongs to the universal ribosomal protein uS13 family. In terms of assembly, part of the 30S ribosomal subunit. Forms a loose heterodimer with protein S19. Forms two bridges to the 50S subunit in the 70S ribosome.

In terms of biological role, located at the top of the head of the 30S subunit, it contacts several helices of the 16S rRNA. In the 70S ribosome it contacts the 23S rRNA (bridge B1a) and protein L5 of the 50S subunit (bridge B1b), connecting the 2 subunits; these bridges are implicated in subunit movement. Contacts the tRNAs in the A and P-sites. In Colwellia psychrerythraea (strain 34H / ATCC BAA-681) (Vibrio psychroerythus), this protein is Small ribosomal subunit protein uS13.